The sequence spans 363 residues: RNA polymerase I-specific transcription initiation factor RRN5 (363 aa).

The segment at 301-344 (LSRRDAPPVHQDENQENQENQENQEQDNTASEGESEAERDEIDE) is disordered. The segment covering 302–313 (SRRDAPPVHQDE) has biased composition (basic and acidic residues). The segment covering 317–328 (NQENQENQEQDN) has biased composition (low complexity). Acidic residues predominate over residues 333-344 (GESEAERDEIDE).

Component of the UAF (upstream activation factor) complex which consists of UAF30, RRN5, RRN9, RRN10, and histones H3 and H4.

It localises to the nucleus. Its subcellular location is the nucleolus. In terms of biological role, component of the UAF (upstream activation factor) complex which interacts with the upstream element of the RNA polymerase I promoter and forms a stable preinitiation complex. Together with SPT15/TBP UAF seems to stimulate basal transcription to a fully activated level. The sequence is that of RNA polymerase I-specific transcription initiation factor RRN5 (RRN5) from Saccharomyces cerevisiae (strain ATCC 204508 / S288c) (Baker's yeast).